The primary structure comprises 89 residues: C-C motif chemokine 18 (89 aa).

Residues 1 to 20 (MKGLAAALLVLVCTMALCSC) form the signal peptide. Intrachain disulfides connect Cys-30/Cys-54 and Cys-31/Cys-70.

Belongs to the intercrine beta (chemokine CC) family. The Cys-30/Cys-54 disulfide bond is required for activity. Expressed at high levels in lung, lymph nodes, placenta, bone marrow, dendritic cells present in germinal centers and T-cell areas of secondary lymphoid organs and macrophages derived from peripheral blood monocytes. Not expressed by peripheral blood monocytes and a monocyte-to-macrophage differentiation is a prerequisite for expression. Expressed in synovial fluids from patients with rheumatoid and septic arthritis and in ovarian carcinoma ascitic fluid.

Its subcellular location is the secreted. Its function is as follows. Chemotactic factor that attracts lymphocytes but not monocytes or granulocytes. May be involved in B-cell migration into B-cell follicles in lymph nodes. Attracts naive T-lymphocytes toward dendritic cells and activated macrophages in lymph nodes, has chemotactic activity for naive T-cells, CD4+ and CD8+ T-cells and thus may play a role in both humoral and cell-mediated immunity responses. This is C-C motif chemokine 18 (CCL18) from Homo sapiens (Human).